We begin with the raw amino-acid sequence, 70 residues long: Large ribosomal subunit protein eL38 (70 aa).

It belongs to the eukaryotic ribosomal protein eL38 family.

This chain is Large ribosomal subunit protein eL38 (RpL38), found in Lonomia obliqua (Moth).